Consider the following 420-residue polypeptide: Gamma-glutamyl phosphate reductase (420 aa).

It belongs to the gamma-glutamyl phosphate reductase family.

It is found in the cytoplasm. It carries out the reaction L-glutamate 5-semialdehyde + phosphate + NADP(+) = L-glutamyl 5-phosphate + NADPH + H(+). It participates in amino-acid biosynthesis; L-proline biosynthesis; L-glutamate 5-semialdehyde from L-glutamate: step 2/2. Catalyzes the NADPH-dependent reduction of L-glutamate 5-phosphate into L-glutamate 5-semialdehyde and phosphate. The product spontaneously undergoes cyclization to form 1-pyrroline-5-carboxylate. This is Gamma-glutamyl phosphate reductase from Neisseria meningitidis serogroup C / serotype 2a (strain ATCC 700532 / DSM 15464 / FAM18).